The chain runs to 368 residues: p21-activated protein kinase-interacting protein 1-like (368 aa).

5 WD repeats span residues 45 to 82, 85 to 123, 126 to 165, 207 to 245, and 248 to 289; these read AHTASLNAVSSSNQFIATGSKDETIQLYDMCKKTEHGA, HHDGTISCLEFYGTSHLLSGGQDGLICVWSTKKWECLKT, AHKGQVTSLSVHPSGKLALSVGTDKTLRTWNLIEGRSAFI, AFTKRISCLKFLKNSLLAVGGDDESVRIYDVTSQKCVCE, and AHEN…IESP.

It localises to the nucleus. Its subcellular location is the nucleolus. Its function is as follows. Negatively regulates the PAK1 kinase. PAK1 is a member of the PAK kinase family, which has been shown to play a positive role in the regulation of signaling pathways involving MAPK8 and RELA. PAK1 exists as an inactive homodimer, which is activated by binding of small GTPases such as CDC42 to an N-terminal regulatory domain. PAK1IP1 also binds to the N-terminus of PAK1, and inhibits the specific activation of PAK1 by CDC42. May be involved in ribosomal large subunit assembly. The chain is p21-activated protein kinase-interacting protein 1-like (pak1ip1) from Danio rerio (Zebrafish).